Reading from the N-terminus, the 622-residue chain is Chaperone protein HscA homolog (622 aa).

Belongs to the heat shock protein 70 family.

Chaperone involved in the maturation of iron-sulfur cluster-containing proteins. Has a low intrinsic ATPase activity which is markedly stimulated by HscB. The polypeptide is Chaperone protein HscA homolog (Acidovorax sp. (strain JS42)).